The primary structure comprises 455 residues: uncharacterized protein (455 aa).

N-linked (GlcNAc...) asparagine glycans are attached at residues asparagine 42, asparagine 49, and asparagine 70. The next 4 membrane-spanning stretches (helical) occupy residues alanine 127–phenylalanine 147, serine 153–isoleucine 173, isoleucine 177–tyrosine 197, and tyrosine 377–phenylalanine 397. Asparagine 403 carries N-linked (GlcNAc...) asparagine glycosylation.

The protein localises to the membrane. This is an uncharacterized protein from Caenorhabditis elegans.